The primary structure comprises 65 residues: Large ribosomal subunit protein bL35 (65 aa).

The disordered stretch occupies residues 1–65; it reads MPKMKTNRAA…GRLDRMLPYL (65 aa). A compositionally biased stretch (basic residues) spans 10–44; it reads AAKRFRKTASGKYKAGHANRSHILTKKATKRKRNL. Residues 50 to 65 are compositionally biased toward basic and acidic residues; sequence VRAEDAGRLDRMLPYL.

Belongs to the bacterial ribosomal protein bL35 family.

The polypeptide is Large ribosomal subunit protein bL35 (Xylella fastidiosa (strain M12)).